The chain runs to 130 residues: Small ribosomal subunit protein uS9 (130 aa).

Residues Asp-107–Arg-130 are disordered. The span at Val-111 to Arg-130 shows a compositional bias: basic residues.

It belongs to the universal ribosomal protein uS9 family.

The protein is Small ribosomal subunit protein uS9 of Streptococcus sanguinis (strain SK36).